A 204-amino-acid polypeptide reads, in one-letter code: FMN-dependent NADH:quinone oxidoreductase (204 aa).

Residues serine 9, serine 15–serine 17, methionine 95–phenylalanine 98, and serine 139–glycine 142 each bind FMN.

Belongs to the azoreductase type 1 family. Homodimer. FMN serves as cofactor.

The enzyme catalyses 2 a quinone + NADH + H(+) = 2 a 1,4-benzosemiquinone + NAD(+). It catalyses the reaction N,N-dimethyl-1,4-phenylenediamine + anthranilate + 2 NAD(+) = 2-(4-dimethylaminophenyl)diazenylbenzoate + 2 NADH + 2 H(+). In terms of biological role, quinone reductase that provides resistance to thiol-specific stress caused by electrophilic quinones. Its function is as follows. Also exhibits azoreductase activity. Catalyzes the reductive cleavage of the azo bond in aromatic azo compounds to the corresponding amines. This chain is FMN-dependent NADH:quinone oxidoreductase, found in Methylocella silvestris (strain DSM 15510 / CIP 108128 / LMG 27833 / NCIMB 13906 / BL2).